A 312-amino-acid polypeptide reads, in one-letter code: Methionyl-tRNA formyltransferase (312 aa).

Residue 109–112 (SLLP) participates in (6S)-5,6,7,8-tetrahydrofolate binding.

Belongs to the Fmt family.

The enzyme catalyses L-methionyl-tRNA(fMet) + (6R)-10-formyltetrahydrofolate = N-formyl-L-methionyl-tRNA(fMet) + (6S)-5,6,7,8-tetrahydrofolate + H(+). Its function is as follows. Attaches a formyl group to the free amino group of methionyl-tRNA(fMet). The formyl group appears to play a dual role in the initiator identity of N-formylmethionyl-tRNA by promoting its recognition by IF2 and preventing the misappropriation of this tRNA by the elongation apparatus. The polypeptide is Methionyl-tRNA formyltransferase (Ruminiclostridium cellulolyticum (strain ATCC 35319 / DSM 5812 / JCM 6584 / H10) (Clostridium cellulolyticum)).